We begin with the raw amino-acid sequence, 289 residues long: MQSISVLICVLLALSILNFTVASLTQRPIYAIAHRVLRNEAVTAALSHGANALEVDLTAWYFGWWADHDGKLFSAGSTARDLFKFIAQKQWTKDYNISFVWLDIKNPDFCRKGRPCSIEALRDLAREILEPAGIRVLYGFFETAESRGFKVIRDGLNSNEAVVLSGETSTILHLYNISGAGIPVKQMVMDFGDSWLRKGVDIYPELRYGSWKRDHGKLGKVFSWTSAQGDTEMVRYLLREAGIDGLIYGYQTDEYNDKSGPKSALKDIVDFVEAHSDTHRMATEDDAPW.

A signal peptide spans 1–22; it reads MQSISVLICVLLALSILNFTVA. H34 is an active-site residue. Residues E54, D56, and D103 each contribute to the Mg(2+) site. An SMD-tail motif is present at residues 282–289; it reads ATEDDAPW.

It belongs to the sphingomyelinase D/phospholipase D family. Mg(2+) is required as a cofactor.

The protein localises to the secreted. The catalysed reaction is a sphingomyelin + H2O = an N-acylsphing-4-enine 1-phosphate + choline + H(+). Its activity is regulated as follows. Sphingomyelinase activity is reduced by 33 percent following addition of EDTA. Catalyzes the hydrolysis of sphingomyelin. Sphingomyelinases D are produced by some spider in their venoms, but also by arthropods such as ticks, or pathogenic bacteria and fungi. They might play a role in pathogenicity through different mechanisms, such as membrane destabilization and host cell penetration, but also pulmonary inflammation and cutaneous lesions. The sequence is that of Sphingomyelinase D from Aspergillus flavus (strain ATCC 200026 / FGSC A1120 / IAM 13836 / NRRL 3357 / JCM 12722 / SRRC 167).